The primary structure comprises 3707 residues: Basement membrane-specific heparan sulfate proteoglycan core protein (3707 aa).

An N-terminal signal peptide occupies residues 1–21; it reads MGQRAVGSLLLGLLLHARLLA. Ser-65, Ser-71, and Ser-76 each carry an O-linked (Xyl...) (heparan sulfate) serine glycan. Residues 80 to 191 enclose the SEA domain; the sequence is QMVYFRALVN…WGFKFRRLGT (112 aa). A glycan (N-linked (GlcNAc...) asparagine) is linked at Asn-89. 4 LDL-receptor class A domains span residues 195–234, 281–319, 320–359, and 360–403; these read FPRV…ELNC, GPSA…ELGC, ASPP…EANC, and SVKQ…EFGC. Intrachain disulfides connect Cys-199/Cys-212, Cys-206/Cys-225, Cys-219/Cys-234, Cys-285/Cys-297, Cys-292/Cys-310, Cys-304/Cys-319, Cys-325/Cys-337, Cys-332/Cys-350, Cys-344/Cys-359, Cys-368/Cys-381, Cys-375/Cys-394, Cys-388/Cys-403, and Cys-428/Cys-479. An N-linked (GlcNAc...) asparagine glycan is attached at Asn-358. The Ig-like C2-type 1 domain maps to 404-504; it reads MPPQVVTPPQ…VLELVPQRGP (101 aa). Positions 521–530 constitute a Laminin EGF-like 1; first part domain; that stretch reads CFCFGVTNVC. The 193-residue stretch at 538–730 folds into the Laminin IV type A 1 domain; sequence DQIRLSFDQP…IHGRAHSVEE (193 aa). Asn-554 carries an N-linked (GlcNAc...) asparagine glycan. The region spanning 731–763 is the Laminin EGF-like 1; second part domain; the sequence is CRCPIGYSGLSCESCDAHFTRVPGGPYLGTCSG. Disulfide bonds link Cys-764/Cys-773, Cys-766/Cys-780, Cys-783/Cys-792, Cys-795/Cys-811, Cys-814/Cys-829, Cys-816/Cys-839, Cys-842/Cys-851, Cys-854/Cys-869, Cys-879/Cys-892, Cys-894/Cys-903, and Cys-906/Cys-921. Laminin EGF-like domains are found at residues 764–813 and 814–871; these read CNCN…ACRP and CPCP…KCRP. One can recognise a Laminin EGF-like 4; truncated domain in the interval 879–923; it reads CDERGSLGTSGETCRCKNNVVGRLCNECSDGSFHLSKQNPDGCLK. A Laminin EGF-like 5; first part domain is found at 924-933; that stretch reads CFCMGVSRQC. Residues 941-1125 form the Laminin IV type A 2 domain; the sequence is AQVLGASEQP…GQDSAREVEQ (185 aa). Positions 1126–1158 constitute a Laminin EGF-like 5; second part domain; it reads CTCPPGYRGPSCQDCDTGYTRVPSGLYLGTCER. 12 disulfide bridges follow: Cys-1159/Cys-1168, Cys-1161/Cys-1175, Cys-1178/Cys-1187, Cys-1190/Cys-1206, Cys-1209/Cys-1224, Cys-1211/Cys-1234, Cys-1237/Cys-1246, Cys-1249/Cys-1263, Cys-1275/Cys-1287, Cys-1277/Cys-1293, Cys-1295/Cys-1304, and Cys-1307/Cys-1322. Laminin EGF-like domains lie at 1159–1208, 1209–1265, and 1275–1324; these read CNCH…DCQP, CPCY…PCHR, and CGCD…GCLP. A Laminin EGF-like 9; first part domain is found at 1325 to 1334; it reads CFCMGVTQQC. One can recognise a Laminin IV type A 3 domain in the interval 1344 to 1529; it reads ISTHFAPGDF…SGPRALEVEE (186 aa). The Laminin EGF-like 9; second part domain maps to 1530 to 1562; it reads CRCPPGYVGLSCQDCAPGYTRTGSGLYLGQCEL. 8 disulfide bridges follow: Cys-1563-Cys-1572, Cys-1565-Cys-1579, Cys-1582-Cys-1591, Cys-1594-Cys-1610, Cys-1613-Cys-1628, Cys-1615-Cys-1638, Cys-1641-Cys-1650, and Cys-1653-Cys-1668. Laminin EGF-like domains are found at residues 1563–1612 and 1613–1670; these read CECN…DCQP and CACP…RCQP. Ig-like C2-type domains follow at residues 1677–1771, 1772–1865, 1866–1954, 1955–2049, 2050–2148, 2149–2244, 2245–2343, 2344–2436, 2437–2532, 2533–2619, 2620–2720, 2721–2809, 2810–2895, and 2896–2980; these read EVQI…KPIM, VTVE…STAP, VASI…GGSG, PRVQ…PAPA, SPAP…PGVV, PPIR…PAPG, LAQP…RLRS, PVIS…PPTV, SVLP…APGT, PQVQ…VESP, PYAT…GGST, PTVQ…ALPS, VLIN…LVQA, and LPQI…LQVP. The disordered stretch occupies residues 1713–1733; that stretch reads DGRPLPSSAQQRHQGSELHFP. Disulfide bonds link Cys-1792-Cys-1839, Cys-1886-Cys-1932, and Cys-1976-Cys-2021. The segment at 2039–2061 is disordered; that stretch reads SPSTNSPPAPASPAPIRIESSSS. Positions 2052–2061 are enriched in low complexity; it reads APIRIESSSS. 3 cysteine pairs are disulfide-bonded: Cys-2073–Cys-2118, Cys-2170–Cys-2215, and Cys-2268–Cys-2313. N-linked (GlcNAc...) asparagine glycosylation is found at Asn-2336, Asn-2394, and Asn-2427. Residues Cys-2365 and Cys-2413 are joined by a disulfide bond. Disulfide bonds link Cys-2456/Cys-2506 and Cys-2554/Cys-2599. A glycan (N-linked (GlcNAc...) asparagine) is linked at Asn-2600. A disulfide bridge links Cys-2641 with Cys-2686. 2 cysteine pairs are disulfide-bonded: Cys-2831-Cys-2876 and Cys-2917-Cys-2962. In terms of domain architecture, Laminin G-like 1 spans 2984-3162; that stretch reads IPYFTQTPYS…VNLTTHGISH (179 aa). 2 N-linked (GlcNAc...) asparagine glycosylation sites follow: Asn-3098 and Asn-3154. Disulfide bonds link Cys-3137/Cys-3163, Cys-3166/Cys-3177, Cys-3171/Cys-3187, Cys-3204/Cys-3216, and Cys-3229/Cys-3238. The 79-residue stretch at 3163–3241 folds into the EGF-like domain; sequence CPTCQDRPCQ…GRSGVRCEEG (79 aa). In terms of domain architecture, Laminin G-like 2 spans 3245 to 3425; that stretch reads TTPSMSGAGS…VGQCYDSSPC (181 aa). Asn-3385 is a glycosylation site (N-linked (GlcNAc...) asparagine). 7 disulfides stabilise this stretch: Cys-3393/Cys-3419, Cys-3425/Cys-3436, Cys-3430/Cys-3446, Cys-3448/Cys-3457, Cys-3464/Cys-3476, Cys-3470/Cys-3481, and Cys-3483/Cys-3492. Ser-3510 carries an O-linked (Xyl...) (chondroitin sulfate) serine glycan. The region spanning 3518 to 3705 is the Laminin G-like 3 domain; sequence QYGAYFYDNG…AQAGANTRPC (188 aa). Positions 3574 and 3591 each coordinate Ca(2+). The interval 3615 to 3617 is mediates motor neuron attachment; it reads LRE. The Ca(2+) site is built by Ala-3641 and Asn-3643. A disulfide bridge links Cys-3671 with Cys-3705. Residues 3680-3707 are disordered; the sequence is ARPGAPPPQPLDLQHRAQAGANTRPCPS.

In terms of assembly, has a strong tendency to aggregate in dimers or stellate structures. Interacts with other basement membrane components such as laminin, prolargin and collagen type IV. Interacts with COL13A1. Interacts with FGFBP1. Interacts with VWA1. Interacts (via C-terminus) with ECM1 (via C-terminus). Interacts with SVEP1. Proteolytic processing produces the C-terminal angiogenic peptide, endorepellin. This peptide can be further processed to produce the LG3 peptide. Post-translationally, O-glycosylated. Contains three heparan sulfate chains. Also contains chondroitin sulfate.

It localises to the secreted. It is found in the extracellular space. The protein localises to the extracellular matrix. Its subcellular location is the basement membrane. Its function is as follows. Integral component of basement membranes. Component of the glomerular basement membrane (GBM), responsible for the fixed negative electrostatic membrane charge, and which provides a barrier which is both size- and charge-selective. It serves as an attachment substrate for cells. Plays essential roles in vascularization. Critical for normal heart development and for regulating the vascular response to injury. Also required for avascular cartilage development. Functionally, anti-angiogenic and anti-tumor peptide that inhibits endothelial cell migration, collagen-induced endothelial tube morphogenesis and blood vessel growth in the chorioallantoic membrane. Blocks endothelial cell adhesion to fibronectin and type I collagen. Anti-tumor agent in neovascularization. Interaction with its ligand, integrin alpha2/beta1, is required for the anti-angiogenic properties. Evokes a reduction in phosphorylation of receptor tyrosine kinases via alpha2/beta1 integrin-mediated activation of the tyrosine phosphatase, PTPN6. Has anti-angiogenic properties that require binding of calcium ions for full activity. This chain is Basement membrane-specific heparan sulfate proteoglycan core protein (Hspg2), found in Mus musculus (Mouse).